Here is a 307-residue protein sequence, read N- to C-terminus: D-alanine--D-alanine ligase (307 aa).

The 194-residue stretch at 108-301 (KEVFAAAGLP…FPEFCAWLVE (194 aa)) folds into the ATP-grasp domain. 135-185 (LPPPYVVKPNAEGSSVGVYIVHEDANGPPQLAADMPQDLMVETYVPGRELT) lines the ATP pocket. Positions 252, 268, and 270 each coordinate Mg(2+).

Belongs to the D-alanine--D-alanine ligase family. Mg(2+) is required as a cofactor. The cofactor is Mn(2+).

It localises to the cytoplasm. The enzyme catalyses 2 D-alanine + ATP = D-alanyl-D-alanine + ADP + phosphate + H(+). It functions in the pathway cell wall biogenesis; peptidoglycan biosynthesis. Cell wall formation. The chain is D-alanine--D-alanine ligase from Cereibacter sphaeroides (strain ATCC 17029 / ATH 2.4.9) (Rhodobacter sphaeroides).